Consider the following 297-residue polypeptide: Cell division protein FtsX (297 aa).

Over M1–T21 the chain is Cytoplasmic. Residues I22–V42 traverse the membrane as a helical segment. The Extracellular portion of the chain corresponds to R43–N171. A helical membrane pass occupies residues A172–V192. Over Q193–P219 the chain is Cytoplasmic. Residues F220 to M240 traverse the membrane as a helical segment. Over V241–D267 the chain is Extracellular. Residues I268–Y288 form a helical membrane-spanning segment. Residues L289–R297 lie on the Cytoplasmic side of the membrane.

The protein belongs to the ABC-4 integral membrane protein family. FtsX subfamily. Forms a membrane-associated complex with FtsE.

Its subcellular location is the cell membrane. Functionally, part of the ABC transporter FtsEX involved in cellular division. The chain is Cell division protein FtsX from Mycobacterium tuberculosis (strain ATCC 25177 / H37Ra).